Reading from the N-terminus, the 252-residue chain is Transcriptional regulatory protein HptR (252 aa).

Residues 3–118 (KVVICDDERI…QLEVILGRLV (116 aa)) enclose the Response regulatory domain. Asp-55 bears the 4-aspartylphosphate mark. An HTH araC/xylS-type domain is found at 153 to 250 (NQIVDQIKQS…QMSPSDYCKQ (98 aa)). 2 consecutive DNA-binding regions (H-T-H motif) follow at residues 170 to 191 (SDLIQHIDVSESYAMRTFKDHV) and 217 to 240 (HYEIADKVGFSEYKMFSYHFKKYL).

Post-translationally, phosphorylated by HptS.

It localises to the cytoplasm. Member of the two-component regulatory system HptS/HptR that regulates genes involved in hexose phosphate transport system in response to changes in extracellular phosphate sources. Activates uhpT expression to facilitate glucose-6-phosphate/G6P utilization by directly binding to its promoter. Antagonizes CcpA-dependent transcription of a subset of CcpA-regulated genes involved in antibiotic susceptibility. This Staphylococcus aureus (strain Mu50 / ATCC 700699) protein is Transcriptional regulatory protein HptR (hptR).